We begin with the raw amino-acid sequence, 275 residues long: NAD kinase (275 aa).

The Proton acceptor role is filled by Asp-53. Residues Asp-53 to Gly-54, Asn-129 to Glu-130, Arg-155, Asp-157, and Thr-168 to Ser-173 contribute to the NAD(+) site.

The protein belongs to the NAD kinase family. It depends on a divalent metal cation as a cofactor.

The protein resides in the cytoplasm. It catalyses the reaction NAD(+) + ATP = ADP + NADP(+) + H(+). In terms of biological role, involved in the regulation of the intracellular balance of NAD and NADP, and is a key enzyme in the biosynthesis of NADP. Catalyzes specifically the phosphorylation on 2'-hydroxyl of the adenosine moiety of NAD to yield NADP. The protein is NAD kinase of Streptococcus agalactiae serotype Ia (strain ATCC 27591 / A909 / CDC SS700).